The sequence spans 396 residues: Putative F-box protein At4g22660 (396 aa).

The 52-residue stretch at 7 to 58 (PNTWSDLPLDLLNLVFKRLSFANFRQAKSVCSSWYSASKQSVPKNQIPWLML) folds into the F-box domain.

This chain is Putative F-box protein At4g22660, found in Arabidopsis thaliana (Mouse-ear cress).